A 161-amino-acid chain; its full sequence is Lipoprotein signal peptidase (161 aa).

3 helical membrane passes run 4 to 24, 61 to 81, and 87 to 107; these read LLVV…WSKY, KMIF…YLLI, and SIWY…NFID. Catalysis depends on residues aspartate 116 and aspartate 132. Residues 127–147 traverse the membrane as a helical segment; it reads IFNVADSTLVVGVICIFIYLI.

The protein belongs to the peptidase A8 family.

The protein localises to the cell membrane. It carries out the reaction Release of signal peptides from bacterial membrane prolipoproteins. Hydrolyzes -Xaa-Yaa-Zaa-|-(S,diacylglyceryl)Cys-, in which Xaa is hydrophobic (preferably Leu), and Yaa (Ala or Ser) and Zaa (Gly or Ala) have small, neutral side chains.. It participates in protein modification; lipoprotein biosynthesis (signal peptide cleavage). This protein specifically catalyzes the removal of signal peptides from prolipoproteins. In Enterococcus faecalis (strain ATCC 700802 / V583), this protein is Lipoprotein signal peptidase.